We begin with the raw amino-acid sequence, 285 residues long: Tropomyosin-2 (285 aa).

Positions 1 to 277 form a coiled coil; that stretch reads MDAIKKKMQA…KDIGDDLDTA (277 aa). The disordered stretch occupies residues 103-133; the sequence is EERLATATAKLSEASQAADESERARKVLENR. Residues 122 to 133 are compositionally biased toward basic and acidic residues; sequence ESERARKVLENR.

Belongs to the tropomyosin family. Homodimer.

In terms of biological role, tropomyosin, in association with the troponin complex, plays a central role in the calcium dependent regulation of muscle contraction. The sequence is that of Tropomyosin-2 from Bombyx mori (Silk moth).